The primary structure comprises 293 residues: Protein boule-like (293 aa).

Positions 1 to 16 are enriched in polar residues; that stretch reads METESRAQSTNQTQTD. The disordered stretch occupies residues 1–39; sequence METESRAQSTNQTQTDSLSPSPNPVSPVPLNNPTSGPRY. Serine 19, serine 21, and serine 26 each carry phosphoserine. The RRM domain occupies 45–122; the sequence is NRIFVGGIDF…KKLNIGPAIR (78 aa). A DAZ domain is found at 172–196; it reads PSRSISSSPVMVAQPVYQQPAYHYQ.

This sequence belongs to the RRM DAZ family. In terms of assembly, interacts with DAZ1 and DAZL. As to expression, testis specific. Not expressed in early embryos, primoridal germ cells and spermatogonial cells. First expressed in the cytoplasm of spermatocytes and then persists through meiosis.

It localises to the cytoplasm. In terms of biological role, probable RNA-binding protein, which may be required during spermatogenesis. May act by binding to the 3'-UTR of mRNAs and regulating their translation. The sequence is that of Protein boule-like from Mus musculus (Mouse).